The following is a 332-amino-acid chain: GTP 3',8-cyclase (332 aa).

The Radical SAM core domain maps to 7 to 221; sequence SYDRLHDYVR…FDTCKDNGLA (215 aa). Residue Arg16 coordinates GTP. The [4Fe-4S] cluster site is built by Cys23 and Cys27. Tyr29 contributes to the S-adenosyl-L-methionine binding site. A [4Fe-4S] cluster-binding site is contributed by Cys30. Arg66 is a GTP binding site. Gly70 is an S-adenosyl-L-methionine binding site. Thr97 is a GTP binding site. Ser121 lines the S-adenosyl-L-methionine pocket. Lys158 is a GTP binding site. Met192 contributes to the S-adenosyl-L-methionine binding site. [4Fe-4S] cluster contacts are provided by Cys256 and Cys259. 261 to 263 lines the GTP pocket; the sequence is RLR. A [4Fe-4S] cluster-binding site is contributed by Cys273.

The protein belongs to the radical SAM superfamily. MoaA family. Monomer and homodimer. [4Fe-4S] cluster is required as a cofactor.

It catalyses the reaction GTP + AH2 + S-adenosyl-L-methionine = (8S)-3',8-cyclo-7,8-dihydroguanosine 5'-triphosphate + 5'-deoxyadenosine + L-methionine + A + H(+). Its pathway is cofactor biosynthesis; molybdopterin biosynthesis. In terms of biological role, catalyzes the cyclization of GTP to (8S)-3',8-cyclo-7,8-dihydroguanosine 5'-triphosphate. The sequence is that of GTP 3',8-cyclase from Lactiplantibacillus plantarum (strain ATCC BAA-793 / NCIMB 8826 / WCFS1) (Lactobacillus plantarum).